An 87-amino-acid chain; its full sequence is Cobalt transport protein CbiN (87 aa).

2 helical membrane passes run 4–24 (LLLL…EWAG) and 58–78 (MLFS…LGYY).

It belongs to the CbiN family. As to quaternary structure, forms an energy-coupling factor (ECF) transporter complex composed of an ATP-binding protein (A component, CbiO), a transmembrane protein (T component, CbiQ) and 2 possible substrate-capture proteins (S components, CbiM and CbiN) of unknown stoichimetry.

Its subcellular location is the cell membrane. It participates in cofactor biosynthesis; adenosylcobalamin biosynthesis. In terms of biological role, part of the energy-coupling factor (ECF) transporter complex CbiMNOQ involved in cobalt import. This Archaeoglobus fulgidus (strain ATCC 49558 / DSM 4304 / JCM 9628 / NBRC 100126 / VC-16) protein is Cobalt transport protein CbiN.